We begin with the raw amino-acid sequence, 196 residues long: Small ribosomal subunit protein uS4c (196 aa).

The tract at residues 20-39 is disordered; the sequence is GLTRKTPKSGSNLKKKFHSG. Residues 89-152 form the S4 RNA-binding domain; it reads MRLDNILFRL…RSKCLVQNSI (64 aa).

The protein belongs to the universal ribosomal protein uS4 family. As to quaternary structure, part of the 30S ribosomal subunit. Contacts protein S5. The interaction surface between S4 and S5 is involved in control of translational fidelity.

Its subcellular location is the plastid. It localises to the chloroplast. One of the primary rRNA binding proteins, it binds directly to 16S rRNA where it nucleates assembly of the body of the 30S subunit. Its function is as follows. With S5 and S12 plays an important role in translational accuracy. The polypeptide is Small ribosomal subunit protein uS4c (rps4) (Dendrocalamus giganteus (Giant bamboo)).